We begin with the raw amino-acid sequence, 1108 residues long: Activity-dependent neuroprotector homeobox protein (1108 aa).

A binds to beta-catenin/CTNNB1 region spans residues 1–685 (MFQLPVNNLG…ASTITLHLVH (685 aa)). Glycyl lysine isopeptide (Lys-Gly) (interchain with G-Cter in SUMO2) cross-links involve residues Lys39 and Lys72. A C2H2-type 1; degenerate zinc finger spans residues 74 to 97 (FCCSACPFSSKFFSAYKSHFRNVH). Ser98 bears the Phosphoserine mark. A C2H2-type 2; degenerate zinc finger spans residues 107–129 (LNCPYCTFNADKKTLETHIKIFH). Residues 133-154 (SSAPSSSLSTFKDKNKNDGLKP) form a disordered region. Residues 143-154 (FKDKNKNDGLKP) are compositionally biased toward basic and acidic residues. Glycyl lysine isopeptide (Lys-Gly) (interchain with G-Cter in SUMO2) cross-links involve residues Lys144 and Lys155. A C2H2-type 3; degenerate zinc finger spans residues 165–188 (YYCKKCTYRDPLYEIVRKHIYREH). Glycyl lysine isopeptide (Lys-Gly) (interchain with G-Cter in SUMO2) cross-links involve residues Lys203, Lys231, Lys266, Lys274, Lys278, Lys279, Lys311, and Lys335. The segment at 221-244 (IHCKRCLFMPKSYEALVQHVIEDH) adopts a C2H2-type 4; degenerate zinc-finger fold. Arg348 carries the asymmetric dimethylarginine modification. Residues 354–361 (NAPVSIPQ) form a neuroprotective peptide; contributes to CTNNB1-binding, but less effective than whole N-terminal region region. A disordered region spans residues 360–438 (PQQSQSVKQL…PAATGPPPSN (79 aa)). Residues Lys367 and Lys407 each participate in a glycyl lysine isopeptide (Lys-Gly) (interchain with G-Cter in SUMO2) cross-link. Polar residues predominate over residues 393-422 (SLQTANTSLPPGQVKSPSVSQSQASRVLGQ). Phosphoserine is present on residues Ser408 and Ser412. A Glycyl lysine isopeptide (Lys-Gly) (interchain with G-Cter in SUMO2) cross-link involves residue Lys426. Over residues 426 to 437 (KPPPAATGPPPS) the composition is skewed to pro residues. The segment at 446–468 (KICTICNELFPENVYSVHFEKEH) adopts a C2H2-type 5; atypical zinc-finger fold. 2 consecutive C2H2-type zinc fingers follow at residues 488-509 (SKCL…MLIH) and 511-534 (LSCP…RMVH). Glycyl lysine isopeptide (Lys-Gly) (interchain with G-Cter in SUMO2) cross-links involve residues Lys599 and Lys605. Ser607 carries the post-translational modification Phosphoserine. Glycyl lysine isopeptide (Lys-Gly) (interchain with G-Cter in SUMO2) cross-links involve residues Lys615, Lys620, Lys631, and Lys657. Residues 621–646 (TLCPLCFSILKGPISDALAHHLRERH) form a C2H2-type 8; atypical zinc finger. The C2H2-type 9; atypical zinc-finger motif lies at 661–685 (YKCIHCLGVYTSNMTASTITLHLVH). The segment at 690 to 711 (GKTQNGQDKTNAPSRLNQSPGL) is disordered. Positions 691–709 (KTQNGQDKTNAPSRLNQSP) are enriched in polar residues. Lys698 participates in a covalent cross-link: Glycyl lysine isopeptide (Lys-Gly) (interchain with G-Cter in SUMO2). Residue Ser708 is modified to Phosphoserine. Glycyl lysine isopeptide (Lys-Gly) (interchain with G-Cter in SUMO2) cross-links involve residues Lys715, Lys727, and Lys730. Ser737 carries the phosphoserine modification. A Glycyl lysine isopeptide (Lys-Gly) (interchain with G-Cter in SUMO2) cross-link involves residue Lys744. The segment at residues 753 to 813 (LDPKGHEDDS…SNKRKKCVRD (61 aa)) is a DNA-binding region (homeobox). Ser804 is modified (phosphoserine). Glycyl lysine isopeptide (Lys-Gly) (interchain with G-Cter in SUMO2) cross-links involve residues Lys806, Lys828, and Lys834. The span at 851-880 (KDSRVNASKTVDKKHNLGKEDDSFSDSFEH) shows a compositional bias: basic and acidic residues. Positions 851–1037 (KDSRVNASKT…DTEQLKWKNS (187 aa)) are disordered. Ser875, Ser877, Ser885, Ser888, and Ser904 each carry phosphoserine. Glycyl lysine isopeptide (Lys-Gly) (interchain with G-Cter in SUMO2) cross-links involve residues Lys913, Lys928, and Lys941. The segment covering 928–938 (KEEEEEEEEED) has biased composition (acidic residues). Residues 939–959 (GSKYETIHLTEEPAKLMHDAS) show a composition bias toward basic and acidic residues. Phosphoserine occurs at positions 959 and 961. The span at 977 to 988 (PSESGPGSQQIS) shows a compositional bias: polar residues. Lys1022 participates in a covalent cross-link: Glycyl lysine isopeptide (Lys-Gly) (interchain with G-Cter in SUMO2). 2 positions are modified to N6-acetyllysine; alternate: Lys1041 and Lys1048. Glycyl lysine isopeptide (Lys-Gly) (interchain with G-Cter in SUMO2); alternate cross-links involve residues Lys1041 and Lys1048. The segment at 1050-1108 (QSQWENASENAERLPNPQIEWQNSTIDSEDGEQFDSMTDGVADPMHGSLTGVKLSSQQA) is disordered. At Ser1077 the chain carries Phosphoserine.

In terms of assembly, interacts (via N-terminal region) with beta-catenin/CTNNB1 (via the central armadillo domains); interaction is direct and stabilizes CTNNB1 by modulating its phosphorylation by glycogen synthase kinase-3 beta GSK3B. Expressed in the brain, with a higher expression in cerebellum and hippocampus. Weakly expressed in lung, kidney and intestine, and expressed at intermediate level in testis.

It localises to the nucleus. The protein resides in the chromosome. May be involved in transcriptional regulation. May mediate some of the neuroprotective peptide VIP-associated effects involving normal growth and cancer proliferation. Positively modulates WNT-beta-catenin/CTNN1B signaling, acting by regulating phosphorylation of, and thereby stabilizing, CTNNB1. May be required for neural induction and neuronal differentiation. May be involved in erythroid differentiation. The protein is Activity-dependent neuroprotector homeobox protein (Adnp) of Mus musculus (Mouse).